The sequence spans 624 residues: DNA mismatch repair protein MutL (624 aa).

Residues 416–436 (LTPSVDQPDTGDGENPVAPEK) form a disordered region.

Belongs to the DNA mismatch repair MutL/HexB family.

Its function is as follows. This protein is involved in the repair of mismatches in DNA. It is required for dam-dependent methyl-directed DNA mismatch repair. May act as a 'molecular matchmaker', a protein that promotes the formation of a stable complex between two or more DNA-binding proteins in an ATP-dependent manner without itself being part of a final effector complex. The protein is DNA mismatch repair protein MutL of Chlorobaculum tepidum (strain ATCC 49652 / DSM 12025 / NBRC 103806 / TLS) (Chlorobium tepidum).